The following is a 151-amino-acid chain: Lipoprotein signal peptidase (151 aa).

Transmembrane regions (helical) follow at residues 61-81 and 88-107; these read GSQW…IWIG and SRWQ…GNGI. Active-site residues include aspartate 117 and aspartate 133. The helical transmembrane segment at 128–148 threads the bilayer; that stretch reads VFNLADVAINLAVLCLLIEAI.

This sequence belongs to the peptidase A8 family.

Its subcellular location is the cell inner membrane. It carries out the reaction Release of signal peptides from bacterial membrane prolipoproteins. Hydrolyzes -Xaa-Yaa-Zaa-|-(S,diacylglyceryl)Cys-, in which Xaa is hydrophobic (preferably Leu), and Yaa (Ala or Ser) and Zaa (Gly or Ala) have small, neutral side chains.. The protein operates within protein modification; lipoprotein biosynthesis (signal peptide cleavage). Its function is as follows. This protein specifically catalyzes the removal of signal peptides from prolipoproteins. The protein is Lipoprotein signal peptidase of Synechococcus sp. (strain RCC307).